The sequence spans 314 residues: MSQKVKAAIIGSGNIGTDLMIKMIKYPQNMELAAVVGIDPASEGLAMARERGIATTHEGIEGLKKLPDYAEIGVVFDATSAYAHKVHDEALRADGKLVVDLTPAAIGPFTIPPVNMDEHLDATNVNMVTCGGQATIPIVAAVSQVATVHYAEIVASVSSRSAGPGTRANIDEFTRTTASAIEKVGGAAQGKAIIILNPAEPPMIMRDTVFTLSEGADEEAIRASVAAMVAKVQAYVPGYRLKQEVQFERFGDNNKLKIPGRGEFTGIKTSVFLEVEGAGDYLPSYSGNLDIMTAAAKATGELLAQRIIERRAAA.

12–15 (SGNI) lines the NAD(+) pocket. The active-site Acyl-thioester intermediate is the Cys130. Residues 161–169 (SAGPGTRAN) and Asn288 contribute to the NAD(+) site.

Belongs to the acetaldehyde dehydrogenase family.

The catalysed reaction is acetaldehyde + NAD(+) + CoA = acetyl-CoA + NADH + H(+). In Rhizorhabdus wittichii (strain DSM 6014 / CCUG 31198 / JCM 15750 / NBRC 105917 / EY 4224 / RW1) (Sphingomonas wittichii), this protein is Acetaldehyde dehydrogenase 1/2.